Consider the following 1080-residue polypeptide: Ubiquitin-activating enzyme E1 1 (1080 aa).

Residues 1-14 (MLHKRASEANDKND) are compositionally biased toward basic and acidic residues. Disordered stretches follow at residues 1–20 (MLHK…IIGS) and 29–50 (RIDF…GSSR). The segment covering 38–49 (DKSSSILASGSS) has biased composition (low complexity). Residues Ala502, Asp528, Arg539, Lys552, and 600 to 601 (DN) contribute to the ATP site. The Glycyl thioester intermediate role is filled by Cys656.

It belongs to the ubiquitin-activating E1 family. Monomer. As to expression, expressed in leaves, flowers, roots and stems. Detected in germinating seeds, cotyledons, hypocotyls, vascular tissues, anthers, filaments, pollen, style, stigma, sepals, petals, ovary, developing ovules, funiculi and silique walls.

It carries out the reaction ATP + ubiquitin + [E1 ubiquitin-activating enzyme]-L-cysteine = AMP + diphosphate + S-ubiquitinyl-[E1 ubiquitin-activating enzyme]-L-cysteine.. Its pathway is protein modification; protein ubiquitination. Functionally, activates ubiquitin by first adenylating its C-terminal glycine residue with ATP, and thereafter linking this residue to the side chain of a cysteine residue in E1, yielding a ubiquitin-E1 thioester and free AMP. This Arabidopsis thaliana (Mouse-ear cress) protein is Ubiquitin-activating enzyme E1 1 (UBA1).